The primary structure comprises 136 residues: Frataxin, mitochondrial (136 aa).

It belongs to the frataxin family. As to quaternary structure, monomer. Oligomer.

Its subcellular location is the mitochondrion. The catalysed reaction is 4 Fe(2+) + O2 + 4 H(+) = 4 Fe(3+) + 2 H2O. Its function is as follows. Promotes the biosynthesis of heme as well as the assembly and repair of iron-sulfur clusters by delivering Fe(2+) to proteins involved in these pathways. May play a role in the protection against iron-catalyzed oxidative stress through its ability to catalyze the oxidation of Fe(2+) to Fe(3+). May be able to store large amounts of the metal in the form of a ferrihydrite mineral by oligomerization. This Caenorhabditis elegans protein is Frataxin, mitochondrial (frh-1).